Consider the following 492-residue polypeptide: AAA-ATPase At3g28520 (492 aa).

Residues 7 to 25 traverse the membrane as a helical segment; it reads IWGFTSTTMASIMFLWPMY. 249 to 256 lines the ATP pocket; it reads GPPGTGKS. Disordered stretches follow at residues 313–334 and 462–492; these read KKKK…LKRV and KIEK…MVTK. Basic and acidic residues-rich tracts occupy residues 323–332 and 462–484; these read EEKKEAENLK and KIEK…EKQN.

This sequence belongs to the AAA ATPase family. BCS1 subfamily. Mg(2+) serves as cofactor.

It localises to the membrane. The enzyme catalyses ATP + H2O = ADP + phosphate + H(+). This is AAA-ATPase At3g28520 from Arabidopsis thaliana (Mouse-ear cress).